Here is a 741-residue protein sequence, read N- to C-terminus: Phosphoribosylformylglycinamidine synthase subunit PurL (741 aa).

His54 is a catalytic residue. ATP is bound by residues Tyr57 and Lys96. Mg(2+) is bound at residue Glu98. Residues 99 to 102 (SHNH) and Arg121 each bind substrate. The active-site Proton acceptor is His100. Residue Asp122 coordinates Mg(2+). Residue Gln245 participates in substrate binding. Asp273 is a Mg(2+) binding site. A substrate-binding site is contributed by 317 to 319 (ESQ). Residues Asp500 and Gly537 each coordinate ATP. Asn538 is a binding site for Mg(2+). Ser540 lines the substrate pocket.

It belongs to the FGAMS family. Monomer. Part of the FGAM synthase complex composed of 1 PurL, 1 PurQ and 2 PurS subunits.

It localises to the cytoplasm. It catalyses the reaction N(2)-formyl-N(1)-(5-phospho-beta-D-ribosyl)glycinamide + L-glutamine + ATP + H2O = 2-formamido-N(1)-(5-O-phospho-beta-D-ribosyl)acetamidine + L-glutamate + ADP + phosphate + H(+). Its pathway is purine metabolism; IMP biosynthesis via de novo pathway; 5-amino-1-(5-phospho-D-ribosyl)imidazole from N(2)-formyl-N(1)-(5-phospho-D-ribosyl)glycinamide: step 1/2. Part of the phosphoribosylformylglycinamidine synthase complex involved in the purines biosynthetic pathway. Catalyzes the ATP-dependent conversion of formylglycinamide ribonucleotide (FGAR) and glutamine to yield formylglycinamidine ribonucleotide (FGAM) and glutamate. The FGAM synthase complex is composed of three subunits. PurQ produces an ammonia molecule by converting glutamine to glutamate. PurL transfers the ammonia molecule to FGAR to form FGAM in an ATP-dependent manner. PurS interacts with PurQ and PurL and is thought to assist in the transfer of the ammonia molecule from PurQ to PurL. This Shouchella clausii (strain KSM-K16) (Alkalihalobacillus clausii) protein is Phosphoribosylformylglycinamidine synthase subunit PurL.